We begin with the raw amino-acid sequence, 725 residues long: MRALSLASLIGIASAACPYMTGELERRDTGTDDATAATEEFLSQYYMADNDTFLTSDVGGPIEDQNSLQVGDRGPTLLEDFIFRQKIQRFDHERVPERAVHARGVGAHGVFTSYGDYSNITAASFLGAEGKETPVFVRFSTVAGSRGSSDLARDVHGFATRFYTDEGNFDIVGNNIPVFFIQDAILFPDLIHAVKPRGDNEIPQAATAHDSAWDFFSQQPSSLHTLLWAMSGHGIPRSLRHVDGFGIHTFRFVTDNGDSKLVKFHWKSLQGKASMVWEEAQQVSGKNPDFMRQDLFEAIEAGRYPEWELGVQIMDEEDQLKFGFDLFDPTKIVPEEYVPITKLGKMTLNRNPRNYFAETEQVMFQPGHIVRGVDFTEDPLLQGRLFSYLDTQLNRHGGPNFEQLPINQPRVPVHNNNRDGAGQMFIPLNPNAYSPNTLNKGSPKQANQTVGKGFFTAPGRESTGRFTRAVSPSFEDVWSQPRLFYNSLTPAEQQFVVDAIRFENSNVKSSVVRNNVIIQLNRVSNDLARRVARAIGVEEPEADPTYYHNNKTTDVGTFGQKLKKLDGLKVGFLASVETPASIEAASELSKQLSEDGVDVVVVAERLSDGVDQTYSGSDAIQFDAVIVAPGAEGLFSTFSFTAPSNATSSSTLFPAGRPLQIVIDGFRFGKPVGAVGSAATALKNAGIQTSRDGVYVDKSVTSGFVDGIKDGLRTFKFLDRFKLDH.

The first 15 residues, 1 to 15 (MRALSLASLIGIASA), serve as a signal peptide directing secretion. The propeptide occupies 16 to 27 (ACPYMTGELERR). Asparagine 50 is a glycosylation site (N-linked (GlcNAc...) asparagine). Residue histidine 101 is part of the active site. N-linked (GlcNAc...) asparagine glycosylation occurs at asparagine 119. Asparagine 174 is an active-site residue. Tyrosine 388 contacts heme. N-linked (GlcNAc...) asparagine glycosylation is found at asparagine 447, asparagine 550, and asparagine 645.

This sequence belongs to the catalase family. As to quaternary structure, homotetramer. Requires heme as cofactor.

It localises to the secreted. It catalyses the reaction 2 H2O2 = O2 + 2 H2O. In terms of biological role, occurs in almost all aerobically respiring organisms and serves to protect cells from the toxic effects of hydrogen peroxide through its degradation into water and oxygen. The chain is Catalase B (catB) from Aspergillus oryzae (strain ATCC 42149 / RIB 40) (Yellow koji mold).